The sequence spans 198 residues: N-acetyltransferase 9-like protein (198 aa).

The N-acetyltransferase domain occupies E34 to E178.

This sequence belongs to the acetyltransferase family. GNAT subfamily.

This Caenorhabditis briggsae protein is N-acetyltransferase 9-like protein.